A 327-amino-acid polypeptide reads, in one-letter code: MSENIAVVGSGAFGTALAAVIALAGRSAVTLVGRDPSLIADLKAERLHDAVLPGILLPDTLEFSAEADAITGASIVLFAMPSQAQADAARQYGPYLCKDAVVVTCAKGIERATGNLLTDMLERELPDHSIAVLSGPGFAADIAKGLPTAMAIAAADMETAERLAQAISGRTFRLYASNDRIGVQLGGALKNVLAIACGIVEGRGIGDSARAALIARGLAEMSRFVVAKGGQADTVRGLSGLGDLVLTATSHQSRNLRFGIALGRGEKTDPLQGALVEGAFAASVASRLAAELKVSMPITDAVSAIIDGKLDISEAIEQLMTRPITTE.

Positions 13, 34, and 107 each coordinate NADPH. 2 residues coordinate sn-glycerol 3-phosphate: Lys-107 and Gly-135. Residue Ala-139 coordinates NADPH. The sn-glycerol 3-phosphate site is built by Lys-190, Asp-243, Ser-253, Arg-254, and Asn-255. Lys-190 functions as the Proton acceptor in the catalytic mechanism. Arg-254 is an NADPH binding site. Positions 276 and 277 each coordinate NADPH.

Belongs to the NAD-dependent glycerol-3-phosphate dehydrogenase family.

It localises to the cytoplasm. The catalysed reaction is sn-glycerol 3-phosphate + NAD(+) = dihydroxyacetone phosphate + NADH + H(+). The enzyme catalyses sn-glycerol 3-phosphate + NADP(+) = dihydroxyacetone phosphate + NADPH + H(+). The protein operates within membrane lipid metabolism; glycerophospholipid metabolism. Functionally, catalyzes the reduction of the glycolytic intermediate dihydroxyacetone phosphate (DHAP) to sn-glycerol 3-phosphate (G3P), the key precursor for phospholipid synthesis. In Rhizobium johnstonii (strain DSM 114642 / LMG 32736 / 3841) (Rhizobium leguminosarum bv. viciae), this protein is Glycerol-3-phosphate dehydrogenase [NAD(P)+].